Reading from the N-terminus, the 330-residue chain is uncharacterized protein (330 aa).

Residues 4–242 (LTISDLVVEY…AGEVLFEQST (239 aa)) form the ABC transporter domain. Position 40–47 (40–47 (GPSGCGKT)) interacts with ATP. Residue 210–330 (DRVLELMPAQ…LIEHRELASE (121 aa)) coordinates a nucleoside 3',5'-cyclic phosphate.

Belongs to the ABC transporter superfamily.

This is an uncharacterized protein from Mycobacterium bovis (strain ATCC BAA-935 / AF2122/97).